The primary structure comprises 118 residues: Small ribosomal subunit protein uS13 (118 aa).

A disordered region spans residues 97 to 118 (VRGQRTKTNARTCKGPRKAIKK).

Belongs to the universal ribosomal protein uS13 family. As to quaternary structure, part of the 30S ribosomal subunit. Forms a loose heterodimer with protein S19. Forms two bridges to the 50S subunit in the 70S ribosome.

Located at the top of the head of the 30S subunit, it contacts several helices of the 16S rRNA. In the 70S ribosome it contacts the 23S rRNA (bridge B1a) and protein L5 of the 50S subunit (bridge B1b), connecting the 2 subunits; these bridges are implicated in subunit movement. Contacts the tRNAs in the A and P-sites. The protein is Small ribosomal subunit protein uS13 of Buchnera aphidicola subsp. Schizaphis graminum (strain Sg).